The primary structure comprises 214 residues: Ribosomal RNA large subunit methyltransferase E (214 aa).

Residues Gly60, Trp62, Asp86, Asp102, and Asp127 each contribute to the S-adenosyl-L-methionine site. Lys167 (proton acceptor) is an active-site residue.

The protein belongs to the class I-like SAM-binding methyltransferase superfamily. RNA methyltransferase RlmE family.

The protein localises to the cytoplasm. It catalyses the reaction uridine(2552) in 23S rRNA + S-adenosyl-L-methionine = 2'-O-methyluridine(2552) in 23S rRNA + S-adenosyl-L-homocysteine + H(+). Functionally, specifically methylates the uridine in position 2552 of 23S rRNA at the 2'-O position of the ribose in the fully assembled 50S ribosomal subunit. The protein is Ribosomal RNA large subunit methyltransferase E of Janthinobacterium sp. (strain Marseille) (Minibacterium massiliensis).